Consider the following 347-residue polypeptide: Anthranilate phosphoribosyltransferase (347 aa).

Residues Gly-88, Gly-91 to Asp-92, Thr-96, Asn-98 to Thr-101, Lys-116 to Ser-124, and Ser-128 contribute to the 5-phospho-alpha-D-ribose 1-diphosphate site. Gly-88 is an anthranilate binding site. Ser-100 provides a ligand contact to Mg(2+). Residue Asn-119 participates in anthranilate binding. Arg-174 provides a ligand contact to anthranilate. Mg(2+) contacts are provided by Asp-232 and Glu-233.

This sequence belongs to the anthranilate phosphoribosyltransferase family. In terms of assembly, homodimer. It depends on Mg(2+) as a cofactor.

It carries out the reaction N-(5-phospho-beta-D-ribosyl)anthranilate + diphosphate = 5-phospho-alpha-D-ribose 1-diphosphate + anthranilate. It participates in amino-acid biosynthesis; L-tryptophan biosynthesis; L-tryptophan from chorismate: step 2/5. Its function is as follows. Catalyzes the transfer of the phosphoribosyl group of 5-phosphorylribose-1-pyrophosphate (PRPP) to anthranilate to yield N-(5'-phosphoribosyl)-anthranilate (PRA). This Shewanella oneidensis (strain ATCC 700550 / JCM 31522 / CIP 106686 / LMG 19005 / NCIMB 14063 / MR-1) protein is Anthranilate phosphoribosyltransferase.